The primary structure comprises 563 residues: MDIKRTILIVALAIVTYVGVLKWNQDYGQAAMPTQNVAASTTAPGIPDTAAGTNGSASADVPSANATANTAAAPLETPAVASKDLIHVKTDVLDLAIDPVGGDVVQLRLPLYPRRQDRPDVPFQLFDNGGERTFLAQSGLTGTNGPDARAAGRPVYTSTQKTYQLADGQDTMVVDLKFSENGVNYIKRFTFKRGLYDLVMTYVVDNQSAQPWSGNLFAQLKRDASSDPSSTTATGTATYLGAALWTAAEPYKKVSMKDIDKGQVKETVQGGWVAWLQHYFVTAWIPDHNATNAVQTRKDSQGNYIIGFTSPTLSVAPGAQGETSATLYAGPKSQAVLKELSPGLELTVDYGFLWFIAQPIFWLLQHIHAILGNWGWSIIVLTMLIKGLFFPLSAASYKSMARMRAVAPKLALLKEQHGDDRQKMSQAMMELYKKEKINPLGGCLPILVQMPVFLSLYWVLLESVEMRQAPWILWITDLSIKDPFFILPIIMGATMFIQQRLNPTPPDPMQAKVMKMMPIIFTFFFLWFPAGLVLYWVVNNTLSIAQQAYITRKIEAATKKAAV.

A helical membrane pass occupies residues 1 to 21 (MDIKRTILIVALAIVTYVGVL). The disordered stretch occupies residues 43–62 (APGIPDTAAGTNGSASADVP). 5 consecutive transmembrane segments (helical) span residues 344-364 (LELT…FWLL), 370-390 (ILGN…GLFF), 440-460 (LGGC…YWVL), 471-491 (WILW…PIIM), and 518-538 (PIIF…YWVV).

This sequence belongs to the OXA1/ALB3/YidC family. Type 1 subfamily. As to quaternary structure, interacts with the Sec translocase complex via SecD. Specifically interacts with transmembrane segments of nascent integral membrane proteins during membrane integration.

The protein resides in the cell inner membrane. Required for the insertion and/or proper folding and/or complex formation of integral membrane proteins into the membrane. Involved in integration of membrane proteins that insert both dependently and independently of the Sec translocase complex, as well as at least some lipoproteins. Aids folding of multispanning membrane proteins. The polypeptide is Membrane protein insertase YidC (Pseudomonas syringae pv. syringae (strain B728a)).